We begin with the raw amino-acid sequence, 72 residues long: uncharacterized protein (72 aa).

A helical transmembrane segment spans residues 46 to 66 (AIFVFNLCFIPNLCVACIFNV).

It localises to the membrane. This is an uncharacterized protein from Saccharomyces cerevisiae (strain ATCC 204508 / S288c) (Baker's yeast).